Reading from the N-terminus, the 938-residue chain is Ubiquitin carboxyl-terminal hydrolase Usp2 (938 aa).

6 disordered regions span residues 1-53, 91-117, 130-254, 273-297, 360-410, and 500-610; these read MMLD…KVGA, KVKT…NTSR, FNGN…ISTT, EQNQ…HRYP, LSGQ…NLQQ, and KDAT…EKSE. Residues 22 to 36 show a composition bias toward low complexity; it reads STTKTSSVVATSASS. 4 stretches are compositionally biased toward low complexity: residues 137-158, 167-177, 198-227, and 275-289; these read TTTN…NTSN, STTATATSTST, MNGH…QRQQ, and NQVQ…PSSS. Over residues 392–410 the composition is skewed to polar residues; the sequence is ASRSNHGSQAGGSSSNLQQ. 2 stretches are compositionally biased toward low complexity: residues 502 to 555 and 574 to 583; these read ATTA…TARS and TSRSSIGTSS. Positions 592-610 are enriched in basic and acidic residues; it reads HNSDDGYKTASSSRDEKSE. The region spanning 613-938 is the USP domain; sequence CGLRNIGNTC…SAYILFYERT (326 aa). Cysteine 622 serves as the catalytic Nucleophile. Zn(2+) contacts are provided by cysteine 765, cysteine 768, cysteine 814, and cysteine 817. The active-site Proton acceptor is the histidine 895.

This sequence belongs to the peptidase C19 family. Interacts (via N-terminus) with imd (via N-terminus). Interacts with Rpt6.

The enzyme catalyses Thiol-dependent hydrolysis of ester, thioester, amide, peptide and isopeptide bonds formed by the C-terminal Gly of ubiquitin (a 76-residue protein attached to proteins as an intracellular targeting signal).. Its function is as follows. Hydrolase that deubiquitinates polyubiquitinated target proteins. Required for preventing the activation of the Toll signaling cascades under unchallenged conditions. Essential for bodily calcium homeostasis. In terms of biological role, required for preventing the activation of the immune deficiency (Imd) signaling cascade under unchallenged conditions. Regulates the Imd pathway by specifically removing 'Lys-48'-linked ubiquitin from imd. Also promotes imd degradation probably by binding to imd and enhancing its association with the proteasome. The polypeptide is Ubiquitin carboxyl-terminal hydrolase Usp2 (Drosophila melanogaster (Fruit fly)).